The sequence spans 61 residues: Large ribosomal subunit protein eL29 (61 aa).

Basic residues predominate over residues 1–26 (MAKSKNHTNHNQNKKAHRNGIKRPQK). Positions 1 to 32 (MAKSKNHTNHNQNKKAHRNGIKRPQKHRYDSL) are disordered.

Belongs to the eukaryotic ribosomal protein eL29 family. In terms of assembly, component of the large ribosomal subunit (LSU). Mature yeast ribosomes consist of a small (40S) and a large (60S) subunit. The 40S small subunit contains 1 molecule of ribosomal RNA (18S rRNA) and at least 33 different proteins. The large 60S subunit contains 3 rRNA molecules (25S, 5.8S and 5S rRNA) and at least 46 different proteins.

The protein localises to the cytoplasm. It localises to the nucleus. It is found in the nucleolus. In terms of biological role, component of the ribosome, a large ribonucleoprotein complex responsible for the synthesis of proteins in the cell. The small ribosomal subunit (SSU) binds messenger RNAs (mRNAs) and translates the encoded message by selecting cognate aminoacyl-transfer RNA (tRNA) molecules. The large subunit (LSU) contains the ribosomal catalytic site termed the peptidyl transferase center (PTC), which catalyzes the formation of peptide bonds, thereby polymerizing the amino acids delivered by tRNAs into a polypeptide chain. The nascent polypeptides leave the ribosome through a tunnel in the LSU and interact with protein factors that function in enzymatic processing, targeting, and the membrane insertion of nascent chains at the exit of the ribosomal tunnel. The chain is Large ribosomal subunit protein eL29 (rpl29) from Schizosaccharomyces pombe (strain 972 / ATCC 24843) (Fission yeast).